The following is a 280-amino-acid chain: Lipase chaperone (280 aa).

The chain crosses the membrane as a helical span at residues 5–22; sequence ALTIITIALGSLGAVYFL.

The protein belongs to the lipase chaperone family.

The protein resides in the cell inner membrane. May be involved in the folding of the extracellular lipase during its passage through the periplasm. This is Lipase chaperone (lifO) from Vibrio vulnificus (strain CMCP6).